The following is a 690-amino-acid chain: Eukaryotic translation initiation factor 3 subunit B (690 aa).

Basic and acidic residues predominate over residues 1–11 (MAKKKSEDHSG). Positions 1–37 (MAKKKSEDHSGGDANDSDYNEEPNFEDPPNFVDNISD) are disordered. Acidic residues predominate over residues 15 to 25 (NDSDYNEEPNF). Residues 57 to 141 (SVVVVDNIPK…HTFAVNLFTD (85 aa)) enclose the RRM domain. WD repeat units lie at residues 207–246 (TRERFTDTFVKWSPLGTYVVTFHKPGVAIWGGSSFQKIQK), 247–289 (FPHT…EKRS), 293–331 (DGMSVLSMFRWSHDDKYVARMGDNSIHIYETPSFYLLDL), 334–369 (IKIPGIRGFSWSPTDNVIAYWVEEQNQIPARVTLME), 442–484 (EIRE…KPSL), and 530–575 (PDHF…IKRT). Positions 614 to 645 (QKDRLRLTRASKELLEKRSQLRETFMEYRNKR) form a coiled coil.

This sequence belongs to the eIF-3 subunit B family. Component of the eukaryotic translation initiation factor 3 (eIF-3) complex. The eIF-3 complex interacts with pix. Interacts with mxt.

The protein localises to the cytoplasm. RNA-binding component of the eukaryotic translation initiation factor 3 (eIF-3) complex, which is involved in protein synthesis of a specialized repertoire of mRNAs and, together with other initiation factors, stimulates binding of mRNA and methionyl-tRNAi to the 40S ribosome. The eIF-3 complex specifically targets and initiates translation of a subset of mRNAs involved in cell proliferation. The chain is Eukaryotic translation initiation factor 3 subunit B from Drosophila pseudoobscura pseudoobscura (Fruit fly).